The following is a 165-amino-acid chain: 2-C-methyl-D-erythritol 2,4-cyclodiphosphate synthase (165 aa).

Residues Asp-13 and His-15 each coordinate a divalent metal cation. 4-CDP-2-C-methyl-D-erythritol 2-phosphate-binding positions include 13–15 and 39–40; these read DRH and HS. Position 47 (His-47) interacts with a divalent metal cation. 4-CDP-2-C-methyl-D-erythritol 2-phosphate is bound by residues 61–63 and Phe-141; that span reads DIG.

Belongs to the IspF family. In terms of assembly, homotrimer. Requires a divalent metal cation as cofactor.

The enzyme catalyses 4-CDP-2-C-methyl-D-erythritol 2-phosphate = 2-C-methyl-D-erythritol 2,4-cyclic diphosphate + CMP. It participates in isoprenoid biosynthesis; isopentenyl diphosphate biosynthesis via DXP pathway; isopentenyl diphosphate from 1-deoxy-D-xylulose 5-phosphate: step 4/6. Involved in the biosynthesis of isopentenyl diphosphate (IPP) and dimethylallyl diphosphate (DMAPP), two major building blocks of isoprenoid compounds. Catalyzes the conversion of 4-diphosphocytidyl-2-C-methyl-D-erythritol 2-phosphate (CDP-ME2P) to 2-C-methyl-D-erythritol 2,4-cyclodiphosphate (ME-CPP) with a corresponding release of cytidine 5-monophosphate (CMP). The sequence is that of 2-C-methyl-D-erythritol 2,4-cyclodiphosphate synthase from Thermotoga maritima (strain ATCC 43589 / DSM 3109 / JCM 10099 / NBRC 100826 / MSB8).